The chain runs to 289 residues: Protease HtpX (289 aa).

The next 2 membrane-spanning stretches (helical) occupy residues 5–25 (IVLFAITNLAVLILASIVMSL) and 33–53 (MSGLLVMALILGFGGSLISLL). H140 lines the Zn(2+) pocket. E141 is a catalytic residue. H144 serves as a coordination point for Zn(2+). The next 2 helical transmembrane spans lie at 155–175 (LLQGVLNTFVIVLARVVGGFI) and 193–213 (GIVLVLELLFGLFATIITMWF). E218 provides a ligand contact to Zn(2+).

The protein belongs to the peptidase M48B family. The cofactor is Zn(2+).

The protein resides in the cell inner membrane. The protein is Protease HtpX of Xylella fastidiosa (strain M12).